Reading from the N-terminus, the 426-residue chain is MKHLTEMVRQHKAGKTNGIYAVCSAHPLVLEAAIRYASANQTPLLIEATSNQVDQFGGYTGMTPADFRGFVCQLADSLNFPQDALILGGDHLGPNRWQNLPAAQAMANADDLIKSYVAAGFKKIHLDCSMSCQDDPIPLTDDIVAERAARLAKVAEETCREHFGEADLEYVIGTEVPVPGGAHETLSELAVTTPDAARATLEAHRHAFEKQGLNAIWPRIIALVVQPGVEFDHTNVIDYQSAKATALSQMVENYETLIFEAHSTDYQTPQSLRQLVIDHFAILKVGPALTFALREALFSLAAIEEELVPAKACSGLRQVLENVMLDRPEYWQSHYHGDGNARRLARGYSYSDRVRYYWPDSQIDDAFAHLVRNLADSPIPLPLISQYLPLQYVKVRSGELQPTPRELIINHIQDILAQYHTACEGQ.

It belongs to the GatZ/KbaZ family. KbaZ subfamily. Forms a complex with KbaY.

It participates in carbohydrate metabolism; D-tagatose 6-phosphate degradation; D-glyceraldehyde 3-phosphate and glycerone phosphate from D-tagatose 6-phosphate: step 2/2. Functionally, component of the tagatose-1,6-bisphosphate aldolase KbaYZ that is required for full activity and stability of the Y subunit. Could have a chaperone-like function for the proper and stable folding of KbaY. When expressed alone, KbaZ does not show any aldolase activity. This Escherichia coli O81 (strain ED1a) protein is D-tagatose-1,6-bisphosphate aldolase subunit KbaZ.